Reading from the N-terminus, the 887-residue chain is Oxysterol-binding protein-related protein 3 (887 aa).

The segment at 1-35 is disordered; it reads MMSDEKNLGVSQKLVSPSRSTSSCSSKQGSRQDSW. Phosphoserine occurs at positions 16 and 34. The segment covering 16–32 has biased composition (low complexity); sequence SPSRSTSSCSSKQGSRQ. One can recognise a PH domain in the interval 51–146; it reads PPVQKGFLLK…WVSKLRHHRM (96 aa). Positions 161-167 match the FFAT 1 motif; the sequence is HFFSGST. 3 positions are modified to phosphoserine: serine 200, serine 251, and serine 265. Positions 261–326 are disordered; it reads GSFESPKKEK…KNYSDGSETS (66 aa). Basic residues predominate over residues 268–280; that stretch reads KEKRSHRRWRSRA. Residues serine 304, serine 309, serine 320, serine 323, serine 371, serine 372, serine 410, serine 425, serine 437, and serine 440 each carry the phosphoserine modification. An FFAT 2 motif is present at residues 450–454; the sequence is EFFDA.

It belongs to the OSBP family. Homodimer. Interacts with RRAS. Interacts (phosphorylated form) with VAPA. Interacts with OSBPL6. In terms of processing, phosphorylation is enhanced in vitro by phorbol-12-myristate-13-acetate (PMA), forskolin and calcium ionophore A23187. Phosphorylation seems to be stimulated in conditions of low cell-cell (or cell-matrix) adhesion. In terms of tissue distribution, expressed in a subset of small lymphocytes (at protein level). Expressed at high concentration in kidney, lymph node and thymus. Expressed at moderate concentration in stomach, jejunum, ileum, appendix, spleen, leukocytes, trachea, lung and thyroid gland. Expressed at low concentration in whole brain, esophagus, duodenum, ileocecum, colon, skeletal muscle, bone marrow, placenta and mammary gland. Isoform 1a, isoform 1b, isoform 1c and isoform 1d are highly expressed in brain, bone marrow, colon, kidney, lung, skeletal muscle, spleen, thymus and thyroid. Not expressed in heart and liver. Isoform 2a, isoform 2b, isoform 2c and isoform 2d are expressed in brain, bone marrow, kidney, skeletal muscle, spleen, thymus and thyroid. Not expressed in heart, liver and lung.

The protein resides in the endoplasmic reticulum membrane. It is found in the cytoplasm. It localises to the cytosol. Its subcellular location is the cell membrane. The protein localises to the cell projection. The protein resides in the filopodium tip. It is found in the nucleus membrane. Phosphoinositide-binding protein which associates with both cell and endoplasmic reticulum (ER) membranes. Can bind to the ER membrane protein VAPA and recruit VAPA to plasma membrane sites, thus linking these intracellular compartments. The ORP3-VAPA complex stimulates RRAS signaling which in turn attenuates integrin beta-1 (ITGB1) activation at the cell surface. With VAPA, may regulate ER morphology. Has a role in regulation of the actin cytoskeleton, cell polarity and cell adhesion. Binds to phosphoinositides with preference for PI(3,4)P2 and PI(3,4,5)P3. Also binds 25-hydroxycholesterol and cholesterol. The protein is Oxysterol-binding protein-related protein 3 (OSBPL3) of Homo sapiens (Human).